The primary structure comprises 179 residues: Large ribosomal subunit protein uL5 (179 aa).

It belongs to the universal ribosomal protein uL5 family. As to quaternary structure, part of the 50S ribosomal subunit; part of the 5S rRNA/L5/L18/L25 subcomplex. Contacts the 5S rRNA and the P site tRNA. Forms a bridge to the 30S subunit in the 70S ribosome.

Functionally, this is one of the proteins that bind and probably mediate the attachment of the 5S RNA into the large ribosomal subunit, where it forms part of the central protuberance. In the 70S ribosome it contacts protein S13 of the 30S subunit (bridge B1b), connecting the 2 subunits; this bridge is implicated in subunit movement. Contacts the P site tRNA; the 5S rRNA and some of its associated proteins might help stabilize positioning of ribosome-bound tRNAs. The polypeptide is Large ribosomal subunit protein uL5 (Francisella tularensis subsp. mediasiatica (strain FSC147)).